A 293-amino-acid polypeptide reads, in one-letter code: Pantothenate synthetase (293 aa).

M30–H37 contacts ATP. H37 serves as the catalytic Proton donor. Q61 is a (R)-pantoate binding site. Q61 provides a ligand contact to beta-alanine. G147–D150 is a binding site for ATP. (R)-pantoate is bound at residue Q153. ATP is bound by residues V176 and C184 to R187.

Belongs to the pantothenate synthetase family. In terms of assembly, homodimer.

The protein localises to the cytoplasm. The catalysed reaction is (R)-pantoate + beta-alanine + ATP = (R)-pantothenate + AMP + diphosphate + H(+). The protein operates within cofactor biosynthesis; (R)-pantothenate biosynthesis; (R)-pantothenate from (R)-pantoate and beta-alanine: step 1/1. In terms of biological role, catalyzes the condensation of pantoate with beta-alanine in an ATP-dependent reaction via a pantoyl-adenylate intermediate. This is Pantothenate synthetase from Brucella abortus (strain S19).